Reading from the N-terminus, the 251-residue chain is Hydroxyacylglutathione hydrolase (251 aa).

Positions 53, 55, 57, 58, 110, 127, and 165 each coordinate Zn(2+).

This sequence belongs to the metallo-beta-lactamase superfamily. Glyoxalase II family. In terms of assembly, monomer. Zn(2+) serves as cofactor.

The catalysed reaction is an S-(2-hydroxyacyl)glutathione + H2O = a 2-hydroxy carboxylate + glutathione + H(+). The protein operates within secondary metabolite metabolism; methylglyoxal degradation; (R)-lactate from methylglyoxal: step 2/2. Its function is as follows. Thiolesterase that catalyzes the hydrolysis of S-D-lactoyl-glutathione to form glutathione and D-lactic acid. The polypeptide is Hydroxyacylglutathione hydrolase (Salmonella agona (strain SL483)).